The chain runs to 139 residues: Acidic phospholipase A2 H1E6 (139 aa).

An N-terminal signal peptide occupies residues 1 to 16; that stretch reads MRTLWILAVLQVGVEG. 7 disulfides stabilise this stretch: C42-C132, C44-C60, C59-C111, C65-C139, C66-C104, C73-C97, and C91-C102. Positions 43, 45, and 47 each coordinate Ca(2+). H63 is an active-site residue. D64 contributes to the Ca(2+) binding site. The active site involves D105.

Homodimer. Requires Ca(2+) as cofactor. Expressed by the venom gland.

The protein localises to the secreted. It carries out the reaction a 1,2-diacyl-sn-glycero-3-phosphocholine + H2O = a 1-acyl-sn-glycero-3-phosphocholine + a fatty acid + H(+). Snake venom phospholipase A2 (PLA2) that inhibits ADP-induced platelet aggregation. PLA2 catalyzes the calcium-dependent hydrolysis of the 2-acyl groups in 3-sn-phosphoglycerides. The chain is Acidic phospholipase A2 H1E6 from Calloselasma rhodostoma (Malayan pit viper).